Consider the following 666-residue polypeptide: tRNA 5-methylaminomethyl-2-thiouridine biosynthesis bifunctional protein MnmC (666 aa).

The tRNA (mnm(5)s(2)U34)-methyltransferase stretch occupies residues 1–253 (MSSPFVPIIT…KRHMICAHYE (253 aa)). The interval 283–666 (VGGGLAGCFI…FLRKKIIQGP (384 aa)) is FAD-dependent cmnm(5)s(2)U34 oxidoreductase.

It in the N-terminal section; belongs to the methyltransferase superfamily. tRNA (mnm(5)s(2)U34)-methyltransferase family. This sequence in the C-terminal section; belongs to the DAO family. FAD is required as a cofactor.

The protein localises to the cytoplasm. It catalyses the reaction 5-aminomethyl-2-thiouridine(34) in tRNA + S-adenosyl-L-methionine = 5-methylaminomethyl-2-thiouridine(34) in tRNA + S-adenosyl-L-homocysteine + H(+). Catalyzes the last two steps in the biosynthesis of 5-methylaminomethyl-2-thiouridine (mnm(5)s(2)U) at the wobble position (U34) in tRNA. Catalyzes the FAD-dependent demodification of cmnm(5)s(2)U34 to nm(5)s(2)U34, followed by the transfer of a methyl group from S-adenosyl-L-methionine to nm(5)s(2)U34, to form mnm(5)s(2)U34. The chain is tRNA 5-methylaminomethyl-2-thiouridine biosynthesis bifunctional protein MnmC from Legionella pneumophila (strain Lens).